Here is an 864-residue protein sequence, read N- to C-terminus: Mitochondrial 15S rRNA processing factor CCM1 (864 aa).

The N-terminal 76 residues, 1-76 (MYMARCGPKN…REFSNTLKER (76 aa)), are a transit peptide targeting the mitochondrion. 2 PPR repeats span residues 319 to 353 (NKQN…STKH) and 356 to 390 (DICT…NIKP).

This sequence belongs to the CCM1 family. As to quaternary structure, binds to mitochondrial small subunit 15S rRNA.

It is found in the mitochondrion. Its function is as follows. Regulates mitochondrial small subunit maturation by controlling 15S rRNA 5'-end processing. Localizes to the 5' precursor of the 15S rRNA in a position that is subsequently occupied by mS47 in the mature yeast mtSSU. Uses structure and sequence-specific RNA recognition, binding to a single-stranded region of the precursor and specifically recognizing bases -6 to -1. The exchange of Ccm1 for mS47 is coupled to the irreversible removal of precursor rRNA that is accompanied by conformational changes of the mitoribosomal proteins uS5m and mS26. These conformational changes signal completion of 5'-end rRNA processing through protection of the mature 5'-end of the 15S rRNA and stabilization of mS47. The removal of the 5' precursor together with the dissociation of Ccm1 may be catalyzed by the 5'-3' exoribonuclease Pet127. Involved in the specific removal of group I introns in mitochondrial encoded transcripts. This is Mitochondrial 15S rRNA processing factor CCM1 (CCM1) from Saccharomyces cerevisiae (strain RM11-1a) (Baker's yeast).